Consider the following 363-residue polypeptide: Chorismate synthase (363 aa).

The tract at residues 42-61 (QRDLDRRKPGTSRHTTQRQE) is disordered. Positions 48 and 54 each coordinate NADP(+). FMN is bound by residues 125–127 (RSS), 237–238 (NA), Gly277, 292–296 (KPTSS), and Arg318.

Belongs to the chorismate synthase family. In terms of assembly, homotetramer. The cofactor is FMNH2.

The catalysed reaction is 5-O-(1-carboxyvinyl)-3-phosphoshikimate = chorismate + phosphate. Its pathway is metabolic intermediate biosynthesis; chorismate biosynthesis; chorismate from D-erythrose 4-phosphate and phosphoenolpyruvate: step 7/7. Functionally, catalyzes the anti-1,4-elimination of the C-3 phosphate and the C-6 proR hydrogen from 5-enolpyruvylshikimate-3-phosphate (EPSP) to yield chorismate, which is the branch point compound that serves as the starting substrate for the three terminal pathways of aromatic amino acid biosynthesis. This reaction introduces a second double bond into the aromatic ring system. The chain is Chorismate synthase from Pseudomonas aeruginosa (strain LESB58).